Here is a 302-residue protein sequence, read N- to C-terminus: Acetyl-coenzyme A carboxylase carboxyl transferase subunit beta (302 aa).

A CoA carboxyltransferase N-terminal domain is found at 25-294 (VWTKCDSCGQ…PHFDEAAPVS (270 aa)). Zn(2+) is bound by residues cysteine 29, cysteine 32, cysteine 48, and cysteine 51. Residues 29–51 (CDSCGQVLYRAELERNLEVCPKC) form a C4-type zinc finger. The segment at 281-302 (NQPQPHFDEAAPVSEQENQADA) is disordered.

This sequence belongs to the AccD/PCCB family. Acetyl-CoA carboxylase is a heterohexamer composed of biotin carboxyl carrier protein (AccB), biotin carboxylase (AccC) and two subunits each of ACCase subunit alpha (AccA) and ACCase subunit beta (AccD). Zn(2+) is required as a cofactor.

It localises to the cytoplasm. It catalyses the reaction N(6)-carboxybiotinyl-L-lysyl-[protein] + acetyl-CoA = N(6)-biotinyl-L-lysyl-[protein] + malonyl-CoA. It participates in lipid metabolism; malonyl-CoA biosynthesis; malonyl-CoA from acetyl-CoA: step 1/1. Component of the acetyl coenzyme A carboxylase (ACC) complex. Biotin carboxylase (BC) catalyzes the carboxylation of biotin on its carrier protein (BCCP) and then the CO(2) group is transferred by the transcarboxylase to acetyl-CoA to form malonyl-CoA. The chain is Acetyl-coenzyme A carboxylase carboxyl transferase subunit beta from Serratia proteamaculans (strain 568).